The sequence spans 443 residues: Trigger factor (443 aa).

A PPIase FKBP-type domain is found at 161 to 246 (GDKVVIDFQG…IKKIMEGKLP (86 aa)).

The protein belongs to the FKBP-type PPIase family. Tig subfamily.

It is found in the cytoplasm. It catalyses the reaction [protein]-peptidylproline (omega=180) = [protein]-peptidylproline (omega=0). Functionally, involved in protein export. Acts as a chaperone by maintaining the newly synthesized protein in an open conformation. Functions as a peptidyl-prolyl cis-trans isomerase. The protein is Trigger factor of Legionella pneumophila (strain Lens).